The following is a 314-amino-acid chain: tRNA dimethylallyltransferase (314 aa).

11–18 (GPTGSGKT) is a binding site for ATP. Residue 13–18 (TGSGKT) participates in substrate binding. The tract at residues 36-39 (DSMQ) is interaction with substrate tRNA.

Belongs to the IPP transferase family. As to quaternary structure, monomer. It depends on Mg(2+) as a cofactor.

It carries out the reaction adenosine(37) in tRNA + dimethylallyl diphosphate = N(6)-dimethylallyladenosine(37) in tRNA + diphosphate. Functionally, catalyzes the transfer of a dimethylallyl group onto the adenine at position 37 in tRNAs that read codons beginning with uridine, leading to the formation of N6-(dimethylallyl)adenosine (i(6)A). The protein is tRNA dimethylallyltransferase of Chlamydia trachomatis serovar D (strain ATCC VR-885 / DSM 19411 / UW-3/Cx).